The sequence spans 585 residues: Clathrin heavy chain linker domain-containing protein 1 (585 aa).

Positions 118 to 239 form a coiled coil; sequence QLEAKMRIID…DLRFRHQRLQ (122 aa).

This is Clathrin heavy chain linker domain-containing protein 1 (Clhc1) from Rattus norvegicus (Rat).